Consider the following 1593-residue polypeptide: Laminin subunit gamma-1 (1593 aa).

Residues 1 to 19 form the signal peptide; sequence MSLFSCLLLWTLWAACSHG. A Laminin N-terminal domain is found at 30 to 269; that stretch reads RPQRCMPEFV…AISDFAVGGR (240 aa). 2 N-linked (GlcNAc...) asparagine glycosylation sites follow: Asn44 and Asn118. Disulfide bonds link Cys270–Cys279, Cys272–Cys289, Cys291–Cys300, Cys303–Cys323, Cys326–Cys335, Cys328–Cys351, Cys354–Cys363, Cys366–Cys379, Cys382–Cys394, Cys384–Cys400, Cys402–Cys411, Cys414–Cys426, Cys429–Cys440, Cys431–Cys447, Cys449–Cys458, and Cys461–Cys476. 4 Laminin EGF-like domains span residues 270-325, 326-381, 382-428, and 429-478; these read CKCN…ECLP, CNCN…RCLS, CGCN…GCRP, and CSCN…GCTP. The Laminin IV type A domain maps to 505 to 673; it reads RDDEGWKGKQ…PGTPARWVEK (169 aa). N-linked (GlcNAc...) asparagine glycosylation is found at Asn560, Asn634, and Asn654. 24 disulfides stabilise this stretch: Cys708–Cys717, Cys710–Cys724, Cys726–Cys735, Cys738–Cys754, Cys757–Cys765, Cys759–Cys776, Cys779–Cys788, Cys791–Cys809, Cys812–Cys826, Cys814–Cys833, Cys836–Cys845, Cys848–Cys865, Cys868–Cys882, Cys870–Cys889, Cys891–Cys900, Cys903–Cys916, Cys919–Cys931, Cys921–Cys938, Cys940–Cys949, Cys952–Cys964, Cys967–Cys979, Cys969–Cys985, Cys987–Cys996, and Cys999–Cys1012. Laminin EGF-like domains are found at residues 708-756, 757-811, 812-867, 868-918, 919-966, and 967-1014; these read CNCN…DCKA, CPCP…ACRA, CSCN…KCKP, CKCS…GCER, CNCN…GCKP, and CDCD…GCQQ. Residues Asn1006, Asn1091, Asn1159, Asn1189, Asn1207, Asn1254, Asn1364, and Asn1379 are each glycosylated (N-linked (GlcNAc...) asparagine). The tract at residues 1014–1593 is domain II and I; sequence QCPNCYSLVR…CFNTPSLERP (580 aa). Residues 1021 to 1580 adopt a coiled-coil conformation; that stretch reads LVRDKVNQQR…ANLNDIKNTL (560 aa).

In terms of assembly, laminin is a complex glycoprotein, consisting of three different polypeptide chains (alpha, beta, gamma), which are bound to each other by disulfide bonds into a cross-shaped molecule comprising one long and three short arms with globules at each end.

The protein resides in the secreted. It is found in the extracellular space. Its subcellular location is the extracellular matrix. It localises to the basement membrane. Its function is as follows. Binding to cells via a high affinity receptor, laminin is thought to mediate the attachment, migration and organization of cells into tissues during embryonic development by interacting with other extracellular matrix components. This is Laminin subunit gamma-1 (lamc1) from Danio rerio (Zebrafish).